A 166-amino-acid polypeptide reads, in one-letter code: Large ribosomal subunit protein uL10 (166 aa).

It belongs to the universal ribosomal protein uL10 family. Part of the ribosomal stalk of the 50S ribosomal subunit. The N-terminus interacts with L11 and the large rRNA to form the base of the stalk. The C-terminus forms an elongated spine to which L12 dimers bind in a sequential fashion forming a multimeric L10(L12)X complex.

Forms part of the ribosomal stalk, playing a central role in the interaction of the ribosome with GTP-bound translation factors. The protein is Large ribosomal subunit protein uL10 of Limosilactobacillus reuteri (strain DSM 20016) (Lactobacillus reuteri).